Consider the following 480-residue polypeptide: Siroheme synthase (480 aa).

The interval 1–203 (MNYFPIFANL…QQTAQAEQEL (203 aa)) is precorrin-2 dehydrogenase /sirohydrochlorin ferrochelatase. Residues 22–23 (SV) and 43–44 (NQ) each bind NAD(+). At Ser-128 the chain carries Phosphoserine. The segment at 214-480 (GFVSLVGAGP…GGLNAGQRAA (267 aa)) is uroporphyrinogen-III C-methyltransferase. Pro-223 contributes to the S-adenosyl-L-methionine binding site. The Proton acceptor role is filled by Asp-246. The Proton donor role is filled by Lys-268. S-adenosyl-L-methionine contacts are provided by residues 299–301 (GGD), Val-304, 329–330 (TA), Met-381, and Gly-410.

It in the N-terminal section; belongs to the precorrin-2 dehydrogenase / sirohydrochlorin ferrochelatase family. In the C-terminal section; belongs to the precorrin methyltransferase family.

It carries out the reaction uroporphyrinogen III + 2 S-adenosyl-L-methionine = precorrin-2 + 2 S-adenosyl-L-homocysteine + H(+). It catalyses the reaction precorrin-2 + NAD(+) = sirohydrochlorin + NADH + 2 H(+). The enzyme catalyses siroheme + 2 H(+) = sirohydrochlorin + Fe(2+). It participates in cofactor biosynthesis; adenosylcobalamin biosynthesis; precorrin-2 from uroporphyrinogen III: step 1/1. It functions in the pathway cofactor biosynthesis; adenosylcobalamin biosynthesis; sirohydrochlorin from precorrin-2: step 1/1. Its pathway is porphyrin-containing compound metabolism; siroheme biosynthesis; precorrin-2 from uroporphyrinogen III: step 1/1. The protein operates within porphyrin-containing compound metabolism; siroheme biosynthesis; siroheme from sirohydrochlorin: step 1/1. It participates in porphyrin-containing compound metabolism; siroheme biosynthesis; sirohydrochlorin from precorrin-2: step 1/1. Functionally, multifunctional enzyme that catalyzes the SAM-dependent methylations of uroporphyrinogen III at position C-2 and C-7 to form precorrin-2 via precorrin-1. Then it catalyzes the NAD-dependent ring dehydrogenation of precorrin-2 to yield sirohydrochlorin. Finally, it catalyzes the ferrochelation of sirohydrochlorin to yield siroheme. In Neisseria meningitidis serogroup C (strain 053442), this protein is Siroheme synthase.